A 951-amino-acid chain; its full sequence is Serine/threonine-protein phosphatase 4 regulatory subunit 1 (951 aa).

HEAT repeat units lie at residues 26–63 (ESDV…VFNR), 65–81 (MVAR…CDDE), 82–119 (RDCI…FCQE), 127–164 (AFSK…QELI), 168–206 (DVET…MVGK), 208–246 (ITER…VVGQ), 248–285 (ATEE…ATCQ), and 287–324 (IRRT…TFAN). 3 disordered regions span residues 325 to 377 (PSSS…HSSA), 411 to 451 (SESP…PLDQ), and 474 to 499 (QQDP…GPPN). Residues 332-365 (FKDESKSSEDSSAEDKDRMRDNDVVEEEHRRPED) show a composition bias toward basic and acidic residues. 2 stretches are compositionally biased toward polar residues: residues 411 to 421 (SESPQEAASND) and 430 to 445 (NSKS…SSPE). A compositionally biased stretch (basic and acidic residues) spans 474-487 (QQDPEERLSPERTG). One copy of the HEAT 9 repeat lies at 506 to 543 (KELEEMIENLEPHMDDPDVKAQVDVLSAALRASSLDAH). The segment at 590–612 (DYVHGGADVSPGDGFSPDEDRRP) is disordered. HEAT repeat units follow at residues 699–735 (LTAA…LLHI), 800–838 (WISY…RCPK), and 862–899 (QFAV…EKEY). Residue Ser-936 is modified to Phosphoserine.

In terms of assembly, serine/threonine-protein phosphatase 4 (PP4) occurs in different assemblies of the catalytic and one or more regulatory subunits. Component of the PP4 complex PPP4C-PPP4R1. Interacts with HDAC3.

Regulatory subunit of serine/threonine-protein phosphatase 4. May play a role in regulation of cell division in renal glomeruli. The PPP4C-PPP4R1 PP4 complex may play a role in dephosphorylation and regulation of HDAC3. Plays a role in the inhibition of TNF-induced NF-kappa-B activation by regulating the dephosphorylation of TRAF2. This Mus musculus (Mouse) protein is Serine/threonine-protein phosphatase 4 regulatory subunit 1 (Ppp4r1).